The primary structure comprises 416 residues: Gamma-glutamyl phosphate reductase (416 aa).

It belongs to the gamma-glutamyl phosphate reductase family.

The protein resides in the cytoplasm. The enzyme catalyses L-glutamate 5-semialdehyde + phosphate + NADP(+) = L-glutamyl 5-phosphate + NADPH + H(+). It participates in amino-acid biosynthesis; L-proline biosynthesis; L-glutamate 5-semialdehyde from L-glutamate: step 2/2. Catalyzes the NADPH-dependent reduction of L-glutamate 5-phosphate into L-glutamate 5-semialdehyde and phosphate. The product spontaneously undergoes cyclization to form 1-pyrroline-5-carboxylate. The chain is Gamma-glutamyl phosphate reductase from Leptospira interrogans serogroup Icterohaemorrhagiae serovar Lai (strain 56601).